Consider the following 366-residue polypeptide: MSEALKIESRPIPAFYCCYLLRSKNRKSYYIGSTPNPARRLGQHNGSSKGGAKRTSMQGKRPWEMTCIVTGFPSKFAALQFEWAWQNTHATRHIDKDVRDARAEELQKGKKKATSPGRRRKRPPMSLEARLKNLHHLLSVDSFCRWPLNLRFFAPDVFVQWERHTTKMTTTLRKSITIQLTPAEIPKLASDVSTELQTHFIPEVIRAIPVAYEDCKQYIEKSRRVLEDDQRLGCGVCKNPADMSSSLILVCPIEACQTVSHLSCLSNKFLTEGGELETLVPLEGTCPGCRSCIKWATMIKELSLRTNGEEELKLLFKPKRKRKSDNPAESDAADGQALEQEDEELDETWMEDMSQDEEPSPVKKSR.

One can recognise a GIY-YIG domain in the interval 14–95 (AFYCCYLLRS…QNTHATRHID (82 aa)). Disordered stretches follow at residues 31–59 (IGST…SMQG) and 102–124 (RAEE…KRPP). Residues 109 to 123 (GKKKATSPGRRRKRP) show a composition bias toward basic residues. An SLX1-type zinc finger spans residues 234-289 (CGVCKNPADMSSSLILVCPIEACQTVSHLSCLSNKFLTEGGELETLVPLEGTCPGC). A disordered region spans residues 317–366 (KPKRKRKSDNPAESDAADGQALEQEDEELDETWMEDMSQDEEPSPVKKSR). Acidic residues predominate over residues 339 to 359 (EQEDEELDETWMEDMSQDEEP).

The protein belongs to the SLX1 family. In terms of assembly, forms a heterodimer with SLX4. It depends on a divalent metal cation as a cofactor.

It localises to the nucleus. In terms of biological role, catalytic subunit of the SLX1-SLX4 structure-specific endonuclease that resolves DNA secondary structures generated during DNA repair and recombination. Has endonuclease activity towards branched DNA substrates, introducing single-strand cuts in duplex DNA close to junctions with ss-DNA. This Phaeosphaeria nodorum (strain SN15 / ATCC MYA-4574 / FGSC 10173) (Glume blotch fungus) protein is Structure-specific endonuclease subunit SLX1.